The primary structure comprises 407 residues: Cell division control protein 12 (407 aa).

At S2 the chain carries N-acetylserine. The 284-residue stretch at 31 to 314 folds into the Septin-type G domain; it reads EGGTFTVMLC…ETYRRLRLEG (284 aa). Residues 41-48 are G1 motif; it reads GESGLGKT. GTP contacts are provided by residues 41–48, T75, G101, 180–188, G247, and R263; these read GESGLGKT and KADTLTAQE. The interval 98-101 is G3 motif; that stretch reads DTPG. The interval 179-182 is G4 motif; it reads AKAD. A coiled-coil region spans residues 344–406; that stretch reads EEENALKKYF…KSLQVKKSHL (63 aa).

It belongs to the TRAFAC class TrmE-Era-EngA-EngB-Septin-like GTPase superfamily. Septin GTPase family. In terms of assembly, component of the septin complex which consists of CDC3, CDC10, CDC11, CDC12 and probably SHS1 and rearranges to a cortical collar of highly ordered filaments at the mother-bud-neck. A complex formed by CDC3, CDC10, CDC11 and CDC12 is capable of forming long filaments in vitro and the components seem to be present in a 2:2:2:2 arrangement in vivo. The filaments are proposed to be formed by the end-to-end polymerization of CDC3-CDC12-CDC11 complexes with CDC10 serving as a bridge to bundle the polymers into paired filaments. Component of the GIN4 complex composed of at least BNI5, CDC3, CDC10, CDC11, CDC12, GIN4, NAP1 and SHS1. Self-associates. Interacts with SYP1.

Its subcellular location is the membrane. The protein localises to the bud neck. In terms of biological role, septins are GTPases involved in cytokinesis that assemble early in the cell cycle as a patch at the incipient bud site and form a ring approximate 15 minutes before bud emergence, which transforms into an hour-glass shaped collar of cortical filaments that spans both sides of the mother-bud neck. This collar persists until just before cytokinesis, when it splits into two rings that occupy opposite sides of the neck. The septins at the bud neck serve as a structural scaffold that recruits different components involved in diverse processes at specific stages during the cell cycle. Many proteins bind asymmetrically to the septin collar. The septin assembly is regulated by protein kinases GIN4 and/or CLA4. May act by recruiting MYO1 and HOF1, a protein involved in septation, to the site of cleavage. Septins are also involved in cell morphogenesis, bud site selection, chitin deposition, cell cycle regulation, cell compartmentalization and spore wall formation. The chain is Cell division control protein 12 (CDC12) from Saccharomyces cerevisiae (strain ATCC 204508 / S288c) (Baker's yeast).